The following is a 334-amino-acid chain: Lipoyl synthase (334 aa).

Positions 1-36 (MSDALIAPNASSSEAPQSPAEHYDPTRKQKSADKTA) are disordered. The segment covering 7 to 20 (APNASSSEAPQSPA) has biased composition (low complexity). The segment covering 21–36 (EHYDPTRKQKSADKTA) has biased composition (basic and acidic residues). Residues Cys-81, Cys-86, Cys-92, Cys-107, Cys-111, Cys-114, and Ser-321 each coordinate [4Fe-4S] cluster. The 219-residue stretch at 92–310 (CFGKGTATFM…EEEAYKMGFT (219 aa)) folds into the Radical SAM core domain.

This sequence belongs to the radical SAM superfamily. Lipoyl synthase family. It depends on [4Fe-4S] cluster as a cofactor.

The protein localises to the cytoplasm. The catalysed reaction is [[Fe-S] cluster scaffold protein carrying a second [4Fe-4S](2+) cluster] + N(6)-octanoyl-L-lysyl-[protein] + 2 oxidized [2Fe-2S]-[ferredoxin] + 2 S-adenosyl-L-methionine + 4 H(+) = [[Fe-S] cluster scaffold protein] + N(6)-[(R)-dihydrolipoyl]-L-lysyl-[protein] + 4 Fe(3+) + 2 hydrogen sulfide + 2 5'-deoxyadenosine + 2 L-methionine + 2 reduced [2Fe-2S]-[ferredoxin]. It functions in the pathway protein modification; protein lipoylation via endogenous pathway; protein N(6)-(lipoyl)lysine from octanoyl-[acyl-carrier-protein]: step 2/2. Its function is as follows. Catalyzes the radical-mediated insertion of two sulfur atoms into the C-6 and C-8 positions of the octanoyl moiety bound to the lipoyl domains of lipoate-dependent enzymes, thereby converting the octanoylated domains into lipoylated derivatives. The protein is Lipoyl synthase of Cupriavidus taiwanensis (strain DSM 17343 / BCRC 17206 / CCUG 44338 / CIP 107171 / LMG 19424 / R1) (Ralstonia taiwanensis (strain LMG 19424)).